A 627-amino-acid polypeptide reads, in one-letter code: Druantia protein DruC (627 aa).

The protein resides in the cytoplasm. Component of antiviral defense system Druantia type I, composed of DruA, DruB, DruC, DruD and DruE. Expression of Druantia in E.coli (strain MG1655) confers resistance to phage lambda, SECphi18, SECphi27 and T4. The sequence is that of Druantia protein DruC from Escherichia coli (strain UMEA 4076-1).